A 178-amino-acid polypeptide reads, in one-letter code: Arginine repressor (178 aa).

Positions M1–A20 are disordered.

This sequence belongs to the ArgR family.

It is found in the cytoplasm. It functions in the pathway amino-acid biosynthesis; L-arginine biosynthesis [regulation]. Functionally, regulates arginine biosynthesis genes. This chain is Arginine repressor, found in Streptomyces griseus subsp. griseus (strain JCM 4626 / CBS 651.72 / NBRC 13350 / KCC S-0626 / ISP 5235).